The chain runs to 128 residues: Protein Wnt-2b-B (128 aa).

2 disulfide bridges follow: Cys3-Cys16 and Cys5-Cys11. Residue Ser8 is the site of O-palmitoleoyl serine; by PORCN attachment. A glycan (N-linked (GlcNAc...) asparagine) is linked at Asn48. 2 disulfides stabilise this stretch: Cys90-Cys105 and Cys127-Cys128.

This sequence belongs to the Wnt family. Post-translationally, palmitoleoylation is required for efficient binding to frizzled receptors. Depalmitoleoylation leads to Wnt signaling pathway inhibition.

The protein localises to the secreted. It localises to the extracellular space. It is found in the extracellular matrix. In terms of biological role, ligand for members of the frizzled family of seven transmembrane receptors. Functions in the canonical Wnt/beta-catenin signaling pathway. This Xenopus laevis (African clawed frog) protein is Protein Wnt-2b-B (wnt2b-b).